The following is a 258-amino-acid chain: Large ribosomal subunit protein bL21 (258 aa).

Basic and acidic residues predominate over residues 140 to 159 (KAKDAKDEAPKAAPKAEKKK). The disordered stretch occupies residues 140-181 (KAKDAKDEAPKAAPKAEKKKAAPKKAKAEAAPAAADEGTRPA).

The protein belongs to the bacterial ribosomal protein bL21 family. In terms of assembly, part of the 50S ribosomal subunit. Contacts protein L20.

Its function is as follows. This protein binds to 23S rRNA in the presence of protein L20. In Jannaschia sp. (strain CCS1), this protein is Large ribosomal subunit protein bL21.